A 530-amino-acid polypeptide reads, in one-letter code: Phosphoenolpyruvate carboxykinase (ATP) (530 aa).

The substrate site is built by Arg-58, Tyr-195, and Lys-201. ATP contacts are provided by residues Lys-201, His-220, and 236–244 (GLSGTGKTT). Mn(2+) contacts are provided by Lys-201 and His-220. Asp-257 is a binding site for Mn(2+). ATP-binding positions include Glu-285, Arg-321, 440–441 (RI), and Thr-446. Arg-321 contacts substrate.

Belongs to the phosphoenolpyruvate carboxykinase (ATP) family. It depends on Mn(2+) as a cofactor.

The protein localises to the cytoplasm. The enzyme catalyses oxaloacetate + ATP = phosphoenolpyruvate + ADP + CO2. It functions in the pathway carbohydrate biosynthesis; gluconeogenesis. Its function is as follows. Involved in the gluconeogenesis. Catalyzes the conversion of oxaloacetate (OAA) to phosphoenolpyruvate (PEP) through direct phosphoryl transfer between the nucleoside triphosphate and OAA. The chain is Phosphoenolpyruvate carboxykinase (ATP) from Staphylococcus haemolyticus (strain JCSC1435).